Reading from the N-terminus, the 312-residue chain is MANIVFKLSDKDITTLMSRITFDTENLPQGMKARAKYQNTTVNIYQSGKVMFQGNHAEAVSKELLPQHSQLNTNKTKKKNMANSFLEQTLMYDQFNCIGSDEAGSGDYFGPLTVCAAFVTKEHVPILKTLGVDDSKKLTDTKIVELAEQLVTFIPHSLLTLHNEKYNIQQAKGWTQVKMKAVLHNEAIKNVLEKIDSSQLDYIVIDQFAKREVYNHYALSDIPLPKKTKFETKGESKSLAIAVASIISRYAFVTYMDQISKNINMTIPKGAGAKVDVIAAKIIKKYGLSHLDTISKKHFKNREKAQKILKPL.

The RNase H type-2 domain occupies 95-311 (FNCIGSDEAG…REKAQKILKP (217 aa)). Residues D101, E102, and D206 each contribute to the a divalent metal cation site.

The protein belongs to the RNase HII family. RnhC subfamily. Requires Mn(2+) as cofactor. The cofactor is Mg(2+).

The protein resides in the cytoplasm. The catalysed reaction is Endonucleolytic cleavage to 5'-phosphomonoester.. Endonuclease that specifically degrades the RNA of RNA-DNA hybrids. In Staphylococcus aureus (strain MW2), this protein is Ribonuclease HIII.